The sequence spans 427 residues: MVKTDEVEKAYQVAKERYAEIGVDTEKAMEALKKVKLSVHCWQGDDIHGFLNPDQELTGGIGVSGDYPGIARTPDQLTGDLHEALSLIPGSHKVALHTLYAVTDKKKDFNEVGPEDFKYWVDWAKQEGIGLDMNPTFFSHPMVKHNFTLASPEKSVRDYWIEVGKKSREIANYFGQELGQQSVNNFWIPDGFKDNPIDKQAPRERLIESLDEVFAKKYDEKNTIEAVEGKLFGTGIESYTVGSHLFYNNYAISRGKLWTIDAGHWHPTEDVSDKFSAFMPFGKGLMLHVSRPIRWDSDHVVIFDEALQRITRSLVRDNELERTNIGLDFFDATINRVSAWVIGARATQKALLQAMLAPIDDLKKAELNYDFTKRLAVTEELKSFPFGAVWDEFCLKNNTPVGTDWLDEIHNYEQKVQFPRDKKVVTE.

The Mn(2+) site is built by H264, D296, and D298.

This sequence belongs to the rhamnose isomerase family. Mn(2+) is required as a cofactor.

The protein localises to the cytoplasm. The enzyme catalyses L-rhamnopyranose = L-rhamnulose. Its pathway is carbohydrate degradation; L-rhamnose degradation; glycerone phosphate from L-rhamnose: step 1/3. Functionally, catalyzes the interconversion of L-rhamnose and L-rhamnulose. This chain is L-rhamnose isomerase, found in Lactiplantibacillus plantarum (strain ATCC BAA-793 / NCIMB 8826 / WCFS1) (Lactobacillus plantarum).